The primary structure comprises 248 residues: Phosphoglycerate mutase (248 aa).

Substrate-binding positions include 8–15, 21–22, arginine 60, 87–90, lysine 98, 114–115, and 183–184; these read RHGQSEWN, TG, ERHY, RR, and GN. Histidine 9 (tele-phosphohistidine intermediate) is an active-site residue. Glutamate 87 serves as the catalytic Proton donor/acceptor.

This sequence belongs to the phosphoglycerate mutase family. BPG-dependent PGAM subfamily.

It localises to the cytoplasm. It catalyses the reaction (2R)-2-phosphoglycerate = (2R)-3-phosphoglycerate. The protein operates within carbohydrate degradation; glycolysis; pyruvate from D-glyceraldehyde 3-phosphate: step 3/5. This chain is Phosphoglycerate mutase (GPM1), found in Candida albicans (strain SC5314 / ATCC MYA-2876) (Yeast).